The chain runs to 176 residues: Peptide deformylase (176 aa).

Fe cation-binding residues include cysteine 94 and histidine 136. Residue glutamate 137 is part of the active site. Histidine 140 is a Fe cation binding site.

This sequence belongs to the polypeptide deformylase family. Fe(2+) is required as a cofactor.

The enzyme catalyses N-terminal N-formyl-L-methionyl-[peptide] + H2O = N-terminal L-methionyl-[peptide] + formate. Its function is as follows. Removes the formyl group from the N-terminal Met of newly synthesized proteins. Requires at least a dipeptide for an efficient rate of reaction. N-terminal L-methionine is a prerequisite for activity but the enzyme has broad specificity at other positions. The sequence is that of Peptide deformylase from Bartonella quintana (strain Toulouse) (Rochalimaea quintana).